The primary structure comprises 162 residues: Caveolin-2 (162 aa).

At 1–86 the chain is on the cytoplasmic side; that stretch reads MGLETEKADV…FEISKYVIYK (86 aa). At Tyr-19 the chain carries Phosphotyrosine; by SRC. Phosphoserine occurs at positions 20 and 23. The residue at position 27 (Tyr-27) is a Phosphotyrosine; by SRC. Residue Ser-36 is modified to Phosphoserine. The segment at residues 87-107 is an intramembrane region (helical); the sequence is FLTFFLAIPMAFAAGILFAIL. Topologically, residues 108–162 are cytoplasmic; that stretch reads SCLHIWIIMPFVKTCLMVLPSVQTIWKTITDVVIAPLCTSVGRSFSSISLQLSHD.

It belongs to the caveolin family. Monomer or homodimer. Interacts with CAV1; the interaction forms a stable heterooligomeric complex that is required for targeting to lipid rafts and for caveolae formation. Tyrosine phosphorylated forms do not form heterooligomers with the Tyr-19-phosphorylated form existing as a monomer or dimer, and the Tyr-27-form as a monomer only. Interacts (tyrosine phosphorylated form) with the SH2 domain-containing proteins, RASA1, NCK1 and SRC. Interacts (tyrosine phosphorylated form) with INSR, the interaction (Tyr-27-phosphorylated form) is increased on insulin stimulation. Interacts (Tyr-19 phosphorylated form) with MAPK1 (phosphorylated form); the interaction, promoted by insulin, leads to nuclear location and MAPK1 activation. Interacts with STAT3; the interaction is increased on insulin-induced tyrosine phosphorylation leading to STAT activation. Post-translationally, phosphorylated on serine and tyrosine residues. CAV1 promotes phosphorylation on Ser-23 which then targets the complex to the plasma membrane, lipid rafts and caveolae. Phosphorylation on Ser-36 appears to modulate mitosis in endothelial cells. Phosphorylation on both Tyr-19 and Tyr-27 is required for insulin-induced 'Ser-727' phosphorylation of STAT3 and its activation. Phosphorylation on Tyr-19 is required for insulin-induced phosphorylation of MAPK1 and DNA binding of STAT3. Tyrosine phosphorylation is induced by both EGF and insulin (By. similarity).

It is found in the nucleus. It localises to the cytoplasm. The protein localises to the golgi apparatus membrane. Its subcellular location is the cell membrane. The protein resides in the membrane. It is found in the caveola. Its function is as follows. May act as a scaffolding protein within caveolar membranes. Interacts directly with G-protein alpha subunits and can functionally regulate their activity. Acts as an accessory protein in conjunction with CAV1 in targeting to lipid rafts and driving caveolae formation. The Ser-36 phosphorylated form has a role in modulating mitosis in endothelial cells. Positive regulator of cellular mitogenesis of the MAPK signaling pathway. Required for the insulin-stimulated nuclear translocation and activation of MAPK1 and STAT3, and the subsequent regulation of cell cycle progression. In Mustela putorius furo (European domestic ferret), this protein is Caveolin-2 (CAV2).